A 354-amino-acid polypeptide reads, in one-letter code: Variable large protein 15/16 (354 aa).

The signal sequence occupies residues 1 to 18; it reads MRKRISAIIMTLFMVLVS. Cys19 carries the N-palmitoyl cysteine lipid modification. A lipid anchor (S-diacylglycerol cysteine) is attached at Cys19. The disordered stretch occupies residues 333–354; that stretch reads EDKSVEATNTAEATTSGQQAKN. Residues 338–354 are compositionally biased toward polar residues; sequence EATNTAEATTSGQQAKN.

It belongs to the variable large protein (Vlp) family. Delta subfamily.

It localises to the cell outer membrane. The Vlp and Vsp proteins are antigenically distinct proteins, only one vlp or vsp gene is transcriptionally active at any one time. Switching between these genes is a mechanism of host immune response evasion. The chain is Variable large protein 15/16 from Borrelia hermsii.